We begin with the raw amino-acid sequence, 347 residues long: D-alanine--D-alanine ligase (347 aa).

The ATP-grasp domain occupies 131 to 333 (KRVLESAGIA…YPELIERLVD (203 aa)). 161–216 (EEKLAYPVFTKPSNMGSSVGISKSENQEELRQALKLAFRYDSRVLVEQGVNAREIE) is a binding site for ATP. Residues Asp-287, Glu-300, and Asn-302 each coordinate Mg(2+).

This sequence belongs to the D-alanine--D-alanine ligase family. Mg(2+) serves as cofactor. Requires Mn(2+) as cofactor.

It is found in the cytoplasm. It carries out the reaction 2 D-alanine + ATP = D-alanyl-D-alanine + ADP + phosphate + H(+). Its pathway is cell wall biogenesis; peptidoglycan biosynthesis. Its function is as follows. Cell wall formation. The polypeptide is D-alanine--D-alanine ligase (Streptococcus pneumoniae (strain JJA)).